Consider the following 474-residue polypeptide: 3-isopropylmalate dehydratase large subunit (474 aa).

C355, C415, and C418 together coordinate [4Fe-4S] cluster.

It belongs to the aconitase/IPM isomerase family. LeuC type 1 subfamily. In terms of assembly, heterodimer of LeuC and LeuD. [4Fe-4S] cluster serves as cofactor.

The enzyme catalyses (2R,3S)-3-isopropylmalate = (2S)-2-isopropylmalate. It functions in the pathway amino-acid biosynthesis; L-leucine biosynthesis; L-leucine from 3-methyl-2-oxobutanoate: step 2/4. Catalyzes the isomerization between 2-isopropylmalate and 3-isopropylmalate, via the formation of 2-isopropylmaleate. The protein is 3-isopropylmalate dehydratase large subunit of Shewanella putrefaciens (strain CN-32 / ATCC BAA-453).